We begin with the raw amino-acid sequence, 446 residues long: Tubulin beta chain (446 aa).

Q11, E69, S138, G142, T143, G144, N204, and N226 together coordinate GTP. E69 is a binding site for Mg(2+). Residues 421–446 (EYQQYQDAGIDEEEEEYEEELPEGEE) form a disordered region. The segment covering 429-446 (GIDEEEEEYEEELPEGEE) has biased composition (acidic residues).

It belongs to the tubulin family. In terms of assembly, dimer of alpha and beta chains. A typical microtubule is a hollow water-filled tube with an outer diameter of 25 nm and an inner diameter of 15 nM. Alpha-beta heterodimers associate head-to-tail to form protofilaments running lengthwise along the microtubule wall with the beta-tubulin subunit facing the microtubule plus end conferring a structural polarity. Microtubules usually have 13 protofilaments but different protofilament numbers can be found in some organisms and specialized cells. The cofactor is Mg(2+).

It localises to the cytoplasm. The protein localises to the cytoskeleton. Tubulin is the major constituent of microtubules, a cylinder consisting of laterally associated linear protofilaments composed of alpha- and beta-tubulin heterodimers. Microtubules grow by the addition of GTP-tubulin dimers to the microtubule end, where a stabilizing cap forms. Below the cap, tubulin dimers are in GDP-bound state, owing to GTPase activity of alpha-tubulin. The sequence is that of Tubulin beta chain (TUB2) from Fusarium fujikuroi (Bakanae and foot rot disease fungus).